A 244-amino-acid polypeptide reads, in one-letter code: Biosynthetic peptidoglycan transglycosylase (244 aa).

The helical transmembrane segment at 25 to 45 (LLLLLTAALLYQSWFLLHIVY) threads the bilayer.

Belongs to the glycosyltransferase 51 family.

It is found in the cell inner membrane. The enzyme catalyses [GlcNAc-(1-&gt;4)-Mur2Ac(oyl-L-Ala-gamma-D-Glu-L-Lys-D-Ala-D-Ala)](n)-di-trans,octa-cis-undecaprenyl diphosphate + beta-D-GlcNAc-(1-&gt;4)-Mur2Ac(oyl-L-Ala-gamma-D-Glu-L-Lys-D-Ala-D-Ala)-di-trans,octa-cis-undecaprenyl diphosphate = [GlcNAc-(1-&gt;4)-Mur2Ac(oyl-L-Ala-gamma-D-Glu-L-Lys-D-Ala-D-Ala)](n+1)-di-trans,octa-cis-undecaprenyl diphosphate + di-trans,octa-cis-undecaprenyl diphosphate + H(+). Its pathway is cell wall biogenesis; peptidoglycan biosynthesis. Functionally, peptidoglycan polymerase that catalyzes glycan chain elongation from lipid-linked precursors. The sequence is that of Biosynthetic peptidoglycan transglycosylase from Nitrosomonas europaea (strain ATCC 19718 / CIP 103999 / KCTC 2705 / NBRC 14298).